The primary structure comprises 221 residues: MAMVRLKYCGNRSADDVQVALASGADYLGFIFTESKRNVSPEEVKHWLALASLGDKQLVGVFVNASVDQIASVTEQLPLHVVQCHGHETPAELAVVKEATRLSVWKAIHHDDGALETMKQYAGVADGYVVDSRVAGAWGGTGVSFDWEAVPRYLEEAARQGVPCFIAGGITPDNIERLLAYRPDGIDISSGIETDGRKDPAKMKQIEEKTKQYLAVGKGAK.

This sequence belongs to the TrpF family.

The enzyme catalyses N-(5-phospho-beta-D-ribosyl)anthranilate = 1-(2-carboxyphenylamino)-1-deoxy-D-ribulose 5-phosphate. Its pathway is amino-acid biosynthesis; L-tryptophan biosynthesis; L-tryptophan from chorismate: step 3/5. This Geobacillus thermodenitrificans (strain NG80-2) protein is N-(5'-phosphoribosyl)anthranilate isomerase.